Here is a 444-residue protein sequence, read N- to C-terminus: Crh-like protein 3 (444 aa).

The N-terminal stretch at 1–19 (MVGKSTLLSVLASASVAFA) is a signal peptide. Cysteines 27 and 34 form a disulfide. Positions 57 to 271 (SLESCVPEPV…WAGGEIDWNS (215 aa)) constitute a GH16 domain. Glu157 functions as the Nucleophile in the catalytic mechanism. Glu161 serves as the catalytic Proton donor. Glu161 contributes to the chitin binding site. N-linked (GlcNAc...) asparagine glycosylation is found at Asn187 and Asn228. Residues Trp248 and Thr259 each coordinate chitin. N-linked (GlcNAc...) asparagine glycosylation is found at Asn315, Asn323, Asn336, and Asn371. Residue Ser415 is the site of GPI-anchor amidated serine attachment. The propeptide at 416–444 (ADSLVANQERVLKGSLFAGIVAVVAMMAL) is removed in mature form.

The protein belongs to the glycosyl hydrolase 16 family. CRH1 subfamily. Forms homodimers as well as heterodimers with other crh protein members crh1 and crh2. Dimerization may be necessary for the transglycosylation activity.

The protein localises to the cell membrane. It carries out the reaction Random endo-hydrolysis of N-acetyl-beta-D-glucosaminide (1-&gt;4)-beta-linkages in chitin and chitodextrins.. In terms of biological role, dual chitinase/transglycosylase that plays a role in cell wall architecture. Chitinase and transglycosylase activities are coupled. Required for the polysaccharide cross-linking at the septa and the cell wall. More specifically, transfers chitin to 1,6-beta-glucan in the cell wall. The polypeptide is Crh-like protein 3 (Botryotinia fuckeliana (strain B05.10) (Noble rot fungus)).